The sequence spans 143 residues: MAKKIEAYIKLQVPAGQANPSPPVGPALGQHGLNIMEFCKAFNAQTQEMEGGLPIPVVITVYSDRSFTFVTKTPPAPVLLLKAIGAKGGSGTPNTKKVGTVQRDQLEEIARTKWPDLNASDMDAAVRSIAGTARSMGIDVEGV.

Belongs to the universal ribosomal protein uL11 family. Part of the ribosomal stalk of the 50S ribosomal subunit. Interacts with L10 and the large rRNA to form the base of the stalk. L10 forms an elongated spine to which L12 dimers bind in a sequential fashion forming a multimeric L10(L12)X complex. In terms of processing, one or more lysine residues are methylated.

Its function is as follows. Forms part of the ribosomal stalk which helps the ribosome interact with GTP-bound translation factors. This is Large ribosomal subunit protein uL11 from Halorhodospira halophila (strain DSM 244 / SL1) (Ectothiorhodospira halophila (strain DSM 244 / SL1)).